A 217-amino-acid polypeptide reads, in one-letter code: Neuron-specific vesicular protein calcyon (217 aa).

The disordered stretch occupies residues 1-25; it reads MVKLGCSFSGKPGKDPGDQDGAAMD. At 1 to 87 the chain is on the extracellular side; the sequence is MVKLGCSFSG…EEGRRLPTAR (87 aa). Asn73 is a glycosylation site (N-linked (GlcNAc...) asparagine). A helical membrane pass occupies residues 88-108; sequence MIAFAMALLGCVLIMYKAIWY. The Cytoplasmic portion of the chain corresponds to 109–217; it reads DQFTCPDGFL…AGSAAPPPAQ (109 aa). The interval 162–217 is disordered; sequence PAAWGDGYRAAKEERKGPTQAGAAAAATEPPGKPSAKAEKEAARKAAGSAAPPPAQ.

This sequence belongs to the NSG family. In terms of assembly, interacts with CLTA. Post-translationally, glycosylated. As to expression, expressed in the pyramidal cells of the prefrontal cortex, in hypothalamus and in caudate nucleus. No expression in spleen. Up-regulated in the prefrontal cortex of schizophrenic patients with nearly twice the levels of non-schizophrenics.

The protein localises to the cytoplasmic vesicle membrane. It localises to the cell membrane. In terms of biological role, interacts with clathrin light chain A and stimulates clathrin self-assembly and clathrin-mediated endocytosis. The polypeptide is Neuron-specific vesicular protein calcyon (CALY) (Homo sapiens (Human)).